The following is a 509-amino-acid chain: Anaerobic nitric oxide reductase flavorubredoxin (509 aa).

Residues 30-210 are zinc metallo-hydrolase; it reads LQGSSYNSYL…PFSRLVTAKI (181 aa). Fe cation contacts are provided by His-79, Glu-81, Asp-83, His-147, Asp-166, and His-227. Residues 254-393 form the Flavodoxin-like domain; the sequence is ITLFYDTMSN…VCREHGREIA (140 aa). Residues 260-264 and 342-369 each bind FMN; these read TMSNN and AFGS…ETTL. Positions 457–508 constitute a Rubredoxin-like domain; sequence SGCMQCSVCQWIYDPALGEPMQDVTPGTMWSDVPDSFLCPECGLGKDVFNPI. Fe cation is bound by residues Cys-462, Cys-465, Cys-495, and Cys-498.

In the N-terminal section; belongs to the zinc metallo-hydrolase group 3 family. In terms of assembly, homotetramer. Fe cation is required as a cofactor. The cofactor is FMN.

It localises to the cytoplasm. The protein operates within nitrogen metabolism; nitric oxide reduction. Functionally, anaerobic nitric oxide reductase; uses NADH to detoxify nitric oxide (NO), protecting several 4Fe-4S NO-sensitive enzymes. Has at least 2 reductase partners, only one of which (NorW, flavorubredoxin reductase) has been identified. NO probably binds to the di-iron center; electrons enter from the NorW at rubredoxin and are transferred sequentially to the FMN center and the di-iron center. Also able to function as an aerobic oxygen reductase. In Pectobacterium atrosepticum (strain SCRI 1043 / ATCC BAA-672) (Erwinia carotovora subsp. atroseptica), this protein is Anaerobic nitric oxide reductase flavorubredoxin.